Here is a 108-residue protein sequence, read N- to C-terminus: Phosphocarrier protein HPr (108 aa).

The 88-residue stretch at 21–108 (ELQATCIVKN…DAFSSGFGEL (88 aa)) folds into the HPr domain. Catalysis depends on H35, which acts as the Pros-phosphohistidine intermediate.

The protein belongs to the HPr family.

The protein localises to the cytoplasm. Functionally, general (non sugar-specific) component of the phosphoenolpyruvate-dependent sugar phosphotransferase system (sugar PTS). This major carbohydrate active-transport system catalyzes the phosphorylation of incoming sugar substrates concomitantly with their translocation across the cell membrane. The phosphoryl group from phosphoenolpyruvate (PEP) is transferred to the phosphoryl carrier protein HPr by enzyme I. Phospho-HPr then transfers it to the PTS EIIA domain. The chain is Phosphocarrier protein HPr (ptsH) from Chlamydia pneumoniae (Chlamydophila pneumoniae).